The chain runs to 520 residues: Peptidoglycan-recognition protein LC (520 aa).

Polar residues-rich tracts occupy residues 1-14 (MPFS…QCSN) and 27-36 (KNCSTSSTDS). Disordered stretches follow at residues 1–78 (MPFS…RISV) and 239–278 (DKWK…AQTP). Residues 1–291 (MPFSNETEMS…PFLPNTVGRK (291 aa)) lie on the Cytoplasmic side of the membrane. 2 stretches are compositionally biased toward basic and acidic residues: residues 48–58 (RPEKETKDRGT) and 66–78 (KSEE…RISV). The chain crosses the membrane as a helical; Signal-anchor for type II membrane protein span at residues 292-312 (AVTVTVVFVTLTFLLGIVLAT). At 313–520 (TTNLFGKTLN…ASFANWTHWS (208 aa)) the chain is on the extracellular side. Asn-389 is a glycosylation site (N-linked (GlcNAc...) asparagine). Cys-390 and Cys-396 are disulfide-bonded. Positions 412–490 (QKCDIAYNFL…KLGKIAPSYR (79 aa)) constitute an N-acetylmuramoyl-L-alanine amidase domain. The N-linked (GlcNAc...) asparagine glycan is linked to Asn-515.

Belongs to the N-acetylmuramoyl-L-alanine amidase 2 family. Proteolytically cleaved, probably by a metaloprotease such as Mmp2; proteolytic cleavage leads to activation of the imd/Relish signaling pathway. Expressed in the fat body and hemocytes.

The protein resides in the membrane. With respect to regulation, activated by proteolytic cleavage in response to Gram-negative bacterial infection; cleavage may be mediated by endogenous proteases, such as the metalloprotease Mmp2 or elastase, or by bacterially expressed proteases such as the surface serine protease OmpT. Major activator of the imd/Relish pathway and is likely to encode a pattern recognition molecule for the humoral immune response. Required for Relish processing and nuclear translocation following proteolytic cleavage. Involved in the response to lipopolysaccharide (LPS) and peptidoglycan of Gram-negative bacteria. The different isoforms probably display different recognition capabilities to various microbial patterns. Its function is as follows. Mediates the response to LPS and Gram-negative bacteria. Functionally, mediates the response to LPS, peptidoglycan and Gram-negative bacteria. The sequence is that of Peptidoglycan-recognition protein LC (PGRP-LC) from Drosophila melanogaster (Fruit fly).